The primary structure comprises 216 residues: Germin-like protein 1-1 (216 aa).

A signal peptide spans Met1–Ala24. Cys34 and Cys49 are oxidised to a cystine. Residues Asn52 and Asn76 are each glycosylated (N-linked (GlcNAc...) asparagine). The Cupin type-1 domain maps to Ala61 to Asp209. Residues His109, His111, Glu116, and His155 each coordinate Mn(2+).

It belongs to the germin family. Oligomer (believed to be a pentamer but probably hexamer).

Its subcellular location is the secreted. It is found in the extracellular space. The protein resides in the apoplast. Its function is as follows. May play a role in plant defense. Probably has no oxalate oxidase activity even if the active site is conserved. This is Germin-like protein 1-1 (GER4) from Oryza sativa subsp. japonica (Rice).